The primary structure comprises 359 residues: Guanine nucleotide-binding protein G(q) subunit alpha (359 aa).

S-palmitoyl cysteine attachment occurs at residues Cys-9 and Cys-10. Residues 38–359 enclose the G-alpha domain; the sequence is RELKLLLLGT…QLNLKEYNLV (322 aa). The tract at residues 41–54 is G1 motif; the sequence is KLLLLGTGESGKST. The GTP site is built by Ser-50, Gly-51, Lys-52, Ser-53, Thr-54, Ser-156, Leu-180, Arg-181, and Arg-183. Ser-53 provides a ligand contact to Mg(2+). The segment at 178–186 is G2 motif; the sequence is DVLRVRVPT. Thr-186 lines the Mg(2+) pocket. The G3 motif stretch occupies residues 201–210; that stretch reads FRMVDVGGQR. 5-glutamyl histamine is present on Gln-209. The interval 270–277 is G4 motif; the sequence is ILFLNKKD. Residues Asn-274, Lys-275, Asp-277, and Ala-331 each contribute to the GTP site. The G5 motif stretch occupies residues 329-334; sequence TCATDT.

It belongs to the G-alpha family. G(q) subfamily. In terms of assembly, g proteins are composed of 3 units; alpha, beta and gamma. The alpha chain contains the guanine nucleotide binding site. Interacts (GDP-bound form) with RIC8A (via C-terminus); promoting GNAQ folding and association with the plasma membrane. Binds NHERF1. Forms a complex with PECAM1 and BDKRB2. Interacts with GAS2L2. Post-translationally, palmitoylated by ZDHHC3 and ZDHHC7. Palmitoylation occurs in the Golgi and participates in the localization of GNAQ to the plasma membrane. In terms of processing, histaminylated at Gln-209 residues by TGM2.

The protein resides in the cell membrane. The protein localises to the golgi apparatus. It is found in the nucleus. Its subcellular location is the nucleus membrane. The enzyme catalyses GTP + H2O = GDP + phosphate + H(+). In terms of biological role, guanine nucleotide-binding proteins (G proteins) function as transducers downstream of G protein-coupled receptors (GPCRs) in numerous signaling cascades. The alpha chain contains the guanine nucleotide binding site and alternates between an active, GTP-bound state and an inactive, GDP-bound state. Signaling by an activated GPCR promotes GDP release and GTP binding. The alpha subunit has a low GTPase activity that converts bound GTP to GDP, thereby terminating the signal. Both GDP release and GTP hydrolysis are modulated by numerous regulatory proteins. Signaling is mediated via phospholipase C-beta-dependent inositol lipid hydrolysis for signal propagation: activates phospholipase C-beta: following GPCR activation, GNAQ activates PLC-beta (PLCB1, PLCB2, PLCB3 or PLCB4), leading to production of diacylglycerol (DAG) and inositol 1,4,5-trisphosphate (IP3). Required for platelet activation. Regulates B-cell selection and survival and is required to prevent B-cell-dependent autoimmunity. Regulates chemotaxis of BM-derived neutrophils and dendritic cells (in vitro). Transduces FFAR4 signaling in response to long-chain fatty acids (LCFAs). Together with GNA11, required for heart development. The polypeptide is Guanine nucleotide-binding protein G(q) subunit alpha (Gnaq) (Rattus norvegicus (Rat)).